A 495-amino-acid polypeptide reads, in one-letter code: Probable cytochrome P450 508C1 (495 aa).

The helical transmembrane segment at 3–21 (LLNSLLLLFLIYLIHSFYI) threads the bilayer. Cys-442 lines the heme pocket.

Belongs to the cytochrome P450 family. Heme serves as cofactor.

The protein resides in the membrane. This chain is Probable cytochrome P450 508C1 (cyp508C1), found in Dictyostelium discoideum (Social amoeba).